Here is a 213-residue protein sequence, read N- to C-terminus: Protein GET1 (213 aa).

Topologically, residues 1-4 are lumenal; sequence MPSL. A helical membrane pass occupies residues 5-24; sequence LLVVFILQFLLHIINTVGAS. Residues 25-110 lie on the Cytoplasmic side of the membrane; that stretch reads TVNDLLWILY…AFTSAVSTLR (86 aa). Positions 41 to 68 form a coiled coil; sequence TSSSAQKAQKLKKEIVQLKRELGATSAQ. The helical transmembrane segment at 111 to 131 threads the bilayer; it reads WLGTQGLRFVLQFWFAKSPMF. At 132-155 the chain is on the lumenal side; that stretch reads WMPAGWLPFYVEWILSFPRAPLGS. A helical transmembrane segment spans residues 156–172; sequence VSINVWGIACASMIALA. Topologically, residues 173-213 are cytoplasmic; the sequence is AEGLAAVWVLATKRPTPIATEKKEAMAFAADQKSSGEKKEL.

The protein belongs to the WRB/GET1 family. Interacts with GET3.

The protein resides in the endoplasmic reticulum membrane. Functionally, required for the post-translational delivery of tail-anchored (TA) proteins to the endoplasmic reticulum. Acts as a membrane receptor for soluble GET3, which recognizes and selectively binds the transmembrane domain of TA proteins in the cytosol. The chain is Protein GET1 from Phaeosphaeria nodorum (strain SN15 / ATCC MYA-4574 / FGSC 10173) (Glume blotch fungus).